The primary structure comprises 609 residues: Mitochondrial nucleoid-associated protein 1 (609 aa).

The Mitochondrial matrix segment spans residues 1–552; sequence MSDNPPRMEV…IRCNTTIRKS (552 aa). Disordered stretches follow at residues 142–168, 183–202, and 410–441; these read ASEKTSPKRELAKDLPKSGESRCNPSE, SNQDRKYSSTLPNDVQTTSG, and QLSLEPKSDSQFQASHTGCQSPLCSAQRHTPQ. Residues 146–161 are compositionally biased toward basic and acidic residues; sequence TSPKRELAKDLPKSGE. Residues 418 to 441 are compositionally biased toward polar residues; the sequence is DSQFQASHTGCQSPLCSAQRHTPQ. The helical transmembrane segment at 553–573 threads the bilayer; the sequence is GFGGITMLFTGYFVLCCSWSF. Over 574-609 the chain is Mitochondrial intermembrane; it reads RRLKKLCRPLPWKSTVPPCIGVAKTTGDCRSKTCLD.

It is found in the mitochondrion inner membrane. Its subcellular location is the mitochondrion matrix. The protein resides in the mitochondrion nucleoid. Critical regulator of mitochondrial DNA (mtDNA) abundance. Binds dsDNA throughout the mitochondrial genome without sequence specificity and controls mtDNA copy number by promoting its replication. Also plays important roles in mitochondrial metabolism and cell proliferation. This is Mitochondrial nucleoid-associated protein 1 from Homo sapiens (Human).